The sequence spans 356 residues: Protein SEC13 homolog (356 aa).

WD repeat units lie at residues 11-50 (EHED…KALA), 54-95 (GHQG…DWTK), 101-142 (NHDS…GVWD), 149-205 (AHTI…WVEE), 210-253 (AHSD…SEWT), and 259-298 (TFDD…QWIR). A disordered region spans residues 307–356 (IQSKQPSHLPHSHSQQQQALQQHQQQAPSHPGPSSDSEHSSNLSNSQLSN). The span at 308–356 (QSKQPSHLPHSHSQQQQALQQHQQQAPSHPGPSSDSEHSSNLSNSQLSN) shows a compositional bias: low complexity.

The protein belongs to the WD repeat SEC13 family. Probable component of the nuclear pore complex (NPC). Component of the GATOR complex consisting of mio, Nup44A/Seh1, Im11, Nplr3, Nplr2, Wdr24, Wdr59 and Sec13. Within the GATOR complex, probable component of the GATOR2 subcomplex which is likely composed of mio, Nup44A/Seh1, Wdr24, Wdr59 and Sec13. Interacts with msk. Interacts (preferentially when phosphorylated) with Mad. The GATOR2 complex associates with unmet in the absence of S-adenosyl-L-methionine; the mio-Wdr24-Nup44A subcomplex is essential and sufficient for this interaction while Wdr59 and Sec13 are dispensable. This association acts as a nutrient sensor to inhibit mTORC1 signaling in the absence of methionine. In terms of tissue distribution, salivary glands.

The protein resides in the nucleus envelope. The protein localises to the nucleus. Its subcellular location is the nucleoplasm. It is found in the cytoplasm. It localises to the cytoskeleton. The protein resides in the microtubule organizing center. The protein localises to the centrosome. Its subcellular location is the nuclear pore complex. It is found in the cytoplasmic vesicle. It localises to the COPII-coated vesicle membrane. The protein resides in the endoplasmic reticulum membrane. The protein localises to the lysosome membrane. Functionally, functions as a component of the nuclear pore complex (NPC) and the COPII coat. At the endoplasmic reticulum, SEC13 is involved in the biogenesis of COPII-coated vesicles. Recruited to transcriptionally active chromatin at the time of transcription initiation by RNA polymerase II. Required for proper expression of ecdysone-responsive genes such as Eip74EF and Eip75B during larval development. Required for reactivation of transcription after heat shock. Required for nuclear import of phosphorylated Mad via importin msk. Has no role in classical nuclear localization signal (cNLS)-dependent nuclear import via importin-beta. Its function is as follows. A component of the GATOR subcomplex GATOR2 which functions as an activator of the amino acid-sensing branch of the mTORC1 signaling pathway. The two GATOR subcomplexes, GATOR1 and GATOR2, regulate the mTORC1 pathway in order to mediate metabolic homeostasis, female gametogenesis and the response to amino acid limitation and complete starvation. GATOR2 activates the mTORC1 signaling pathway through the inhibition of the GATOR1 subcomplex, controlling the switch to cell proliferation and growth under nutrient replete conditions and during female oocyte development. This Drosophila melanogaster (Fruit fly) protein is Protein SEC13 homolog.